Consider the following 472-residue polypeptide: uncharacterized protein (472 aa).

The protein to B.subtilis YcdC.

This is an uncharacterized protein from Bacillus subtilis (strain 168).